We begin with the raw amino-acid sequence, 275 residues long: NH(3)-dependent NAD(+) synthetase (275 aa).

Residue 50-57 (GISGGVDS) participates in ATP binding. Residue Asp56 coordinates Mg(2+). Arg147 lines the deamido-NAD(+) pocket. Thr167 lines the ATP pocket. Residue Glu172 coordinates Mg(2+). Residues Lys180 and Asp187 each coordinate deamido-NAD(+). ATP-binding residues include Lys196 and Thr218. Residue 267–268 (HK) participates in deamido-NAD(+) binding.

Belongs to the NAD synthetase family. As to quaternary structure, homodimer.

The enzyme catalyses deamido-NAD(+) + NH4(+) + ATP = AMP + diphosphate + NAD(+) + H(+). It participates in cofactor biosynthesis; NAD(+) biosynthesis; NAD(+) from deamido-NAD(+) (ammonia route): step 1/1. Its function is as follows. Catalyzes the ATP-dependent amidation of deamido-NAD to form NAD. Uses ammonia as a nitrogen source. The sequence is that of NH(3)-dependent NAD(+) synthetase from Pseudomonas fluorescens (strain Pf0-1).